We begin with the raw amino-acid sequence, 129 residues long: Glycine cleavage system H protein (129 aa).

Residues 24 to 106 (TVVVGVTSYA…YGDGWLIKVR (83 aa)) enclose the Lipoyl-binding domain. K65 carries the post-translational modification N6-lipoyllysine.

It belongs to the GcvH family. The glycine cleavage system is composed of four proteins: P, T, L and H. (R)-lipoate is required as a cofactor.

Functionally, the glycine cleavage system catalyzes the degradation of glycine. The H protein shuttles the methylamine group of glycine from the P protein to the T protein. The polypeptide is Glycine cleavage system H protein (Gloeobacter violaceus (strain ATCC 29082 / PCC 7421)).